The following is a 293-amino-acid chain: MFKGSIVALITPFKDGAIDRKSLKRLIDFHVEKGTDGIVIAGTTGESATLTFSEHEDLIKMAVEFADKRIPIIAGTGANATHEAIALTKSAEKAGADGSLQIVPYYNKPTQEGIYQHFKAIAEETSIPLILYNIPSRTGVDMLPETFARLYSDFPNVIGIKEATGNVARVSEMISLTNPDVVILSGDDALTLPMMAVGAKGVISVANNLVPEDIATMCRLALEGRFEEARQIHDRYWKLFKTLFIETNPIPVKTAAYLMGLIDDIEMRLPLYYMKPENEEKLKSVLKDYGLIR.

Threonine 44 lines the pyruvate pocket. The active-site Proton donor/acceptor is the tyrosine 132. The active-site Schiff-base intermediate with substrate is lysine 161. Isoleucine 203 serves as a coordination point for pyruvate.

The protein belongs to the DapA family. As to quaternary structure, homotetramer; dimer of dimers.

It is found in the cytoplasm. The enzyme catalyses L-aspartate 4-semialdehyde + pyruvate = (2S,4S)-4-hydroxy-2,3,4,5-tetrahydrodipicolinate + H2O + H(+). It functions in the pathway amino-acid biosynthesis; L-lysine biosynthesis via DAP pathway; (S)-tetrahydrodipicolinate from L-aspartate: step 3/4. In terms of biological role, catalyzes the condensation of (S)-aspartate-beta-semialdehyde [(S)-ASA] and pyruvate to 4-hydroxy-tetrahydrodipicolinate (HTPA). The sequence is that of 4-hydroxy-tetrahydrodipicolinate synthase from Persephonella marina (strain DSM 14350 / EX-H1).